The sequence spans 562 residues: Arginine--tRNA ligase (562 aa).

Positions 122–132 (PNIAKPISMGH) match the 'HIGH' region motif.

This sequence belongs to the class-I aminoacyl-tRNA synthetase family. In terms of assembly, monomer.

The protein resides in the cytoplasm. It carries out the reaction tRNA(Arg) + L-arginine + ATP = L-arginyl-tRNA(Arg) + AMP + diphosphate. This Pediococcus pentosaceus (strain ATCC 25745 / CCUG 21536 / LMG 10740 / 183-1w) protein is Arginine--tRNA ligase.